We begin with the raw amino-acid sequence, 208 residues long: Probable transcriptional regulator ycf29 (208 aa).

In terms of domain architecture, Response regulatory spans 11 to 118 (KLILIEPEEH…ELIAIISNLI (108 aa)). Asp-60 is subject to 4-aspartylphosphate. An HTH luxR-type domain is found at 146–208 (TSFSYINLTV…NRIQILSYFN (63 aa)).

The protein localises to the plastid. The protein resides in the chloroplast. This Guillardia theta (Cryptophyte) protein is Probable transcriptional regulator ycf29 (ycf29).